The sequence spans 502 residues: MAYQVLVICVVSSIVFAYIVWRKERKKKLPPSPKGLPIIGHLHLVSPIPHQDFYKLSLRHGPIMQLFLGSVPCVVASTAEAAKEFLKTHEINFSNRPGQNVAVQFLTYVFGPYGPSVKFIKKLCMSELLGGRMLDQFLPVRQQETKKFIKRVLQKGIAGEAVDFGGEFMRLSNNIISRMTMNQTSSEDEKQAEEMRMLVADVAELMGTFNVSDFIWFLKPFDLQGFNKRIRKTRIRFDAVLDRIIKQREEERRNNKEIGGTRQFKDILDVLLDIGEDDSSEIKLTKENIKAFIMDIFVAGTDTSAATMEWAMAELINNPCVLEKARQEIDAVVGNSRIIEESDIVNLPYLQAIVRETLRIHPGGPLIVRESSKSVVVCGYEIPAKTRLFVNVWAIGRDPNHWENPFEFRPERFFENGQSQLDVRGQHYHFIPFGSGRRSCPGTSLALQIVHVNLAIMIQCFQWKFDNGNNKVDMEEKSGITLPRAHPIICVPVPRLNPFPVM.

Position 440 (Cys440) interacts with heme.

This sequence belongs to the cytochrome P450 family. It depends on heme as a cofactor.

It localises to the membrane. This is Cytochrome P450 93A2 (CYP93A2) from Glycine max (Soybean).